The chain runs to 392 residues: ATP phosphoribosyltransferase regulatory subunit (392 aa).

This sequence belongs to the class-II aminoacyl-tRNA synthetase family. HisZ subfamily. As to quaternary structure, heteromultimer composed of HisG and HisZ subunits.

It localises to the cytoplasm. It participates in amino-acid biosynthesis; L-histidine biosynthesis; L-histidine from 5-phospho-alpha-D-ribose 1-diphosphate: step 1/9. Its function is as follows. Required for the first step of histidine biosynthesis. May allow the feedback regulation of ATP phosphoribosyltransferase activity by histidine. This is ATP phosphoribosyltransferase regulatory subunit from Prochlorococcus marinus (strain MIT 9313).